The following is a 54-amino-acid chain: Defensin-like protein 1 (54 aa).

4 disulfide bridges follow: Cys6-Cys54, Cys17-Cys39, Cys23-Cys48, and Cys27-Cys50.

The protein belongs to the DEFL family.

The protein resides in the secreted. Its function is as follows. Possesses antifungal activity insensitive to inorganic cations. Causes germ tubes and hyphae to swell and form multiple hyphal buds. Binds to the plasma membrane of the fungus. Has no inhibitory effect on insect gut alpha-amylase. This Heuchera sanguinea (Coralbells) protein is Defensin-like protein 1.